The primary structure comprises 300 residues: 4-hydroxy-tetrahydrodipicolinate synthase (300 aa).

Threonine 53 is a pyruvate binding site. Tyrosine 141 functions as the Proton donor/acceptor in the catalytic mechanism. Catalysis depends on lysine 169, which acts as the Schiff-base intermediate with substrate. Position 211 (threonine 211) interacts with pyruvate.

This sequence belongs to the DapA family. As to quaternary structure, homotetramer; dimer of dimers.

It localises to the cytoplasm. The catalysed reaction is L-aspartate 4-semialdehyde + pyruvate = (2S,4S)-4-hydroxy-2,3,4,5-tetrahydrodipicolinate + H2O + H(+). The protein operates within amino-acid biosynthesis; L-lysine biosynthesis via DAP pathway; (S)-tetrahydrodipicolinate from L-aspartate: step 3/4. Functionally, catalyzes the condensation of (S)-aspartate-beta-semialdehyde [(S)-ASA] and pyruvate to 4-hydroxy-tetrahydrodipicolinate (HTPA). The protein is 4-hydroxy-tetrahydrodipicolinate synthase of Rickettsia massiliae (strain Mtu5).